The primary structure comprises 137 residues: Cytochrome b5 (137 aa).

Residues 6-82 (KKVYTLEEVA…MDEYYVGDID (77 aa)) form the Cytochrome b5 heme-binding domain. Heme-binding residues include His41 and His65. The helical transmembrane segment at 108–128 (FIIKILQFLVPLAILGLAVAI) threads the bilayer.

This sequence belongs to the cytochrome b5 family.

Its subcellular location is the endoplasmic reticulum membrane. The protein localises to the microsome membrane. Membrane bound hemoprotein which function as an electron carrier for several membrane bound oxygenases. The protein is Cytochrome b5 of Oryza sativa subsp. japonica (Rice).